The sequence spans 347 residues: 4-hydroxy-2-oxovalerate aldolase 2 (347 aa).

One can recognise a Pyruvate carboxyltransferase domain in the interval 9-259 (ITIVDTTLRD…DTGVDLFPLI (251 aa)). Substrate is bound by residues 17–18 (RD), Ser-171, and His-198. Asp-18 serves as a coordination point for Mn(2+). His-198 and His-200 together coordinate Mn(2+). Tyr-289 serves as a coordination point for substrate.

The protein belongs to the 4-hydroxy-2-oxovalerate aldolase family.

The catalysed reaction is (S)-4-hydroxy-2-oxopentanoate = acetaldehyde + pyruvate. The sequence is that of 4-hydroxy-2-oxovalerate aldolase 2 from Rhodococcus opacus (strain B4).